An 89-amino-acid polypeptide reads, in one-letter code: Putative regulatory protein CYA_2696 (89 aa).

Belongs to the RemA family.

This is Putative regulatory protein CYA_2696 from Synechococcus sp. (strain JA-3-3Ab) (Cyanobacteria bacterium Yellowstone A-Prime).